The sequence spans 65 residues: Lantipeptide Flvbeta.h (65 aa).

Residues 1–27 (MERYGHLAGVIPVDEIDDMFESNVIGG) constitute a propeptide, cleaved by FlvT. The residue at position 28 (threonine 28) is a 2,3-didehydrobutyrine; by FlvM2. A cross-link (lanthionine (Ser-Cys); by FlvM2) is located at residues 29-33 (SSIDC). Residue serine 30 is modified to 2,3-didehydroalanine (Ser); by FlvM2. 2,3-didehydrobutyrine; by FlvM2 is present on threonine 44. A cross-link (beta-methyllanthionine (Thr-Cys); by FlvM2) is located at residues 48 to 54 (TVRIEFC). The segment at residues 56 to 59 (SAAC) is a cross-link (lanthionine (Ser-Cys); by FlvM2). The segment at residues 60–63 (TYSC) is a cross-link (beta-methyllanthionine (Thr-Cys); by FlvM2).

Contains LL-lanthionine, DL-lanthionine, and DL-beta-methyllanthionine, when coepressed in E.coli with the flavecin synthetase FlvM2.

It localises to the secreted. Its function is as follows. Lanthionine-containing peptide that does probably not show antibacterial activity, since its analog [+2]Flvbeta.h does not show antibacterial activity against M.luteus. Also does not show antibiotic activity when tested with [Del2]Flvalpha.a, an analog of Flvalpha.a, which is encoded by the same operon than Flvbeta.h. The bactericidal activity of lantibiotics is based on depolarization of energized bacterial cytoplasmic membranes, initiated by the formation of aqueous transmembrane pores. In Ruminococcus flavefaciens, this protein is Lantipeptide Flvbeta.h.